The following is a 250-amino-acid chain: Ubiquinone/menaquinone biosynthesis C-methyltransferase UbiE (250 aa).

S-adenosyl-L-methionine-binding positions include T74, D94, 122 to 123 (DA), and S139.

Belongs to the class I-like SAM-binding methyltransferase superfamily. MenG/UbiE family.

It carries out the reaction a 2-demethylmenaquinol + S-adenosyl-L-methionine = a menaquinol + S-adenosyl-L-homocysteine + H(+). The catalysed reaction is a 2-methoxy-6-(all-trans-polyprenyl)benzene-1,4-diol + S-adenosyl-L-methionine = a 5-methoxy-2-methyl-3-(all-trans-polyprenyl)benzene-1,4-diol + S-adenosyl-L-homocysteine + H(+). The protein operates within quinol/quinone metabolism; menaquinone biosynthesis; menaquinol from 1,4-dihydroxy-2-naphthoate: step 2/2. Its pathway is cofactor biosynthesis; ubiquinone biosynthesis. Functionally, methyltransferase required for the conversion of demethylmenaquinol (DMKH2) to menaquinol (MKH2) and the conversion of 2-polyprenyl-6-methoxy-1,4-benzoquinol (DDMQH2) to 2-polyprenyl-3-methyl-6-methoxy-1,4-benzoquinol (DMQH2). The protein is Ubiquinone/menaquinone biosynthesis C-methyltransferase UbiE of Dinoroseobacter shibae (strain DSM 16493 / NCIMB 14021 / DFL 12).